We begin with the raw amino-acid sequence, 655 residues long: Epithelial sodium channel subunit gamma (655 aa).

Over 1–55 the chain is Cytoplasmic; the sequence is MAPGEKIKAKIKKNLPVRGPQAPTIKDLMHWYCLNTNTHGCRRIVVSRGRLRRLL. A helical transmembrane segment spans residues 56 to 76; that stretch reads WIAFTLTAVALIIWQCALLVF. Over 77 to 547 the chain is Extracellular; that stretch reads SFYTVSVSIK…GGQLGLWMSC (471 aa). Disulfide bonds link Cys100/Cys289, Cys213/Cys220, Cys266/Cys273, Cys378/Cys463, Cys400/Cys459, Cys404/Cys455, Cys413/Cys440, and Cys415/Cys429. The interval 140–227 is gating release of inhibition by proteolysis (GRIP); protease-sensitive region that is responsible for the proteolytic activation of the channel; it reads RKRREAGSMR…SDCATYTFSS (88 aa). N-linked (GlcNAc...) asparagine glycosylation occurs at Asn215. An N-linked (GlcNAc...) asparagine glycan is attached at Asn277. The N-linked (GlcNAc...) asparagine glycan is linked to Asn503. Residues 548–568 traverse the membrane as a helical segment; that stretch reads SVVCVIEIIEVFFIDFFSIIA. At 569-655 the chain is on the cytoplasmic side; it reads RRQWQKAKDW…LTDTQLTNEF (87 aa). A disordered region spans residues 582–636; sequence RRTPPSTETPSSQQGQDNPALDTDDDLPTFTSAMRLPPAPEAPVPGTPPPRYNTL. Polar residues predominate over residues 585–598; that stretch reads PPSTETPSSQQGQD. Positions 618-632 are enriched in pro residues; the sequence is PPAPEAPVPGTPPPR. Positions 629 to 633 match the PY motif; recruits WW domain-containing proteins and is thereby required for ubiquitination and inhibition of the channel by NEDD4 and NEDD4L motif; sequence PPPRY.

The protein belongs to the amiloride-sensitive sodium channel (TC 1.A.6) family. SCNN1G subfamily. In terms of assembly, component of the heterotrimeric epithelial sodium channel (ENaC) composed of an alpha/SCNN1A, a beta/SCNN1B and a gamma/SCNN1G subunit. Interacts with WWP1 (via WW domains). Interacts with WWP2 (via WW domains); inhibits the channel. Interacts with the full-length immature form of PCSK9 (pro-PCSK9); inhibits ENaC by promoting its proteasomal degradation. Interacts with BPIFA1; the interaction is indirect via SCNN1B and inhibits the proteolytic maturation of SCNN1A and SCNN1G and the activation of ENaC. Post-translationally, phosphorylated on serine and threonine residues. Aldosterone and insulin increase the basal level of phosphorylation. Ubiquitinated. Can be ubiquitinated at multiple sites and undergo monoubiquitination and polyubiquitination. Ubiquitination by NEDD4 or NEDD4L inhibits the ENaC channel through endocytosis, intracellular retention and degradation of its individual subunits. In terms of processing, ENaC is activated through the proteolytic maturation of its subunits. Furin cleaves the SCNN1G subunit first, followed by cleavage by prostasin (PRSS8), which results in a stepwise increase in the open probability of the channel due to the release of an inhibitory tract. BPIFA1, which is recruited by the SCNN1B subunit, prevents the proteolytic activation of ENaC. Post-translationally, N-glycosylated. N-linked glycans are processed to complex type during ENaC complex assembly and transport to the plasma membrane. Lung and kidney.

It localises to the apical cell membrane. The catalysed reaction is Na(+)(in) = Na(+)(out). With respect to regulation, originally identified and characterized by its inhibition by the diuretic drug amiloride. Functionally, this is one of the three pore-forming subunits of the heterotrimeric epithelial sodium channel (ENaC), a critical regulator of sodium balance and fluid homeostasis. ENaC operates in epithelial tissues, where it mediates the electrodiffusion of sodium ions from extracellular fluid through the apical membrane of cells, with water following osmotically. It plays a key role in maintaining sodium homeostasis through electrogenic sodium reabsorption in the kidneys. Additionally, ENaC is essential for airway surface liquid homeostasis, which is crucial for proper mucus clearance. The chain is Epithelial sodium channel subunit gamma from Mus musculus (Mouse).